A 589-amino-acid polypeptide reads, in one-letter code: Cell fusion protein aff-1 (589 aa).

The first 20 residues, 1 to 20 (MRLWQWSIAVAICLVMVTEA), serve as a signal peptide directing secretion. The Extracellular portion of the chain corresponds to 21–537 (RLRRHHRKRR…MAHGGDFTEW (517 aa)). N-linked (GlcNAc...) asparagine glycans are attached at residues asparagine 58, asparagine 138, asparagine 205, asparagine 335, asparagine 382, asparagine 392, and asparagine 408. Residues 538-558 (LKIGIHIVIAVGLLLLLILLF) form a helical membrane-spanning segment. Residues 559 to 589 (TKCLVPLACCSLSIPFKNRNKKKKKKNSSDY) are Cytoplasmic-facing.

It belongs to the EFF/AFF cell fusogen family. In terms of tissue distribution, expressed in amphid sheath cells.

It localises to the cell membrane. Its subcellular location is the apical cell membrane. In terms of biological role, required for cell fusion events during development including the fusion of anchor cells (AC), vulval A and vulval D rings, and late epidermal seam cells. Required for amphid sheath cell fusion induced by entry into dauer stage. The sequence is that of Cell fusion protein aff-1 from Caenorhabditis elegans.